Here is a 487-residue protein sequence, read N- to C-terminus: Rhoptry apical surface protein 1 (487 aa).

The interval Glu-337–Gln-487 is disordered. Basic and acidic residues-rich tracts occupy residues Asp-385–Ala-399 and Glu-454–Tyr-475.

In terms of assembly, interacts with RASP2.

The protein localises to the cytoplasmic vesicle. It localises to the secretory vesicle. The protein resides in the rhoptry membrane. This chain is Rhoptry apical surface protein 1, found in Toxoplasma gondii (strain ATCC 50853 / GT1).